Consider the following 271-residue polypeptide: Metal-staphylopine import system ATP-binding protein CntD (271 aa).

One can recognise an ABC transporter domain in the interval 6 to 251 (VKHLTITDTW…PEHVYTKYLL (246 aa)). Residue 38–45 (GESGSGKS) participates in ATP binding.

Belongs to the ABC transporter superfamily. In terms of assembly, the complex is composed of two ATP-binding proteins (CntD and CntF), two transmembrane proteins (CntB and CntC) and a solute-binding protein (CntA).

It localises to the cell membrane. Functionally, part of the ABC transporter complex CntABCDF (Opp1) involved in the uptake of metal in complex with the metallophore staphylopine (StP). May be involved in the import of a large array of divalent metals ions such as nickel, cobalt, zinc, copper and iron. Probably responsible for energy coupling to the transport system. This is Metal-staphylopine import system ATP-binding protein CntD from Staphylococcus aureus (strain Mu50 / ATCC 700699).